The chain runs to 439 residues: 5-methylthioadenosine/S-adenosylhomocysteine deaminase (439 aa).

The Zn(2+) site is built by histidine 70 and histidine 72. Substrate-binding residues include glutamate 99 and histidine 192. Histidine 219 serves as a coordination point for Zn(2+). Substrate contacts are provided by glutamate 222 and aspartate 307. Aspartate 307 is a binding site for Zn(2+).

This sequence belongs to the metallo-dependent hydrolases superfamily. MTA/SAH deaminase family. It depends on Zn(2+) as a cofactor.

The catalysed reaction is S-adenosyl-L-homocysteine + H2O + H(+) = S-inosyl-L-homocysteine + NH4(+). It catalyses the reaction S-methyl-5'-thioadenosine + H2O + H(+) = S-methyl-5'-thioinosine + NH4(+). Catalyzes the deamination of 5-methylthioadenosine and S-adenosyl-L-homocysteine into 5-methylthioinosine and S-inosyl-L-homocysteine, respectively. Is also able to deaminate adenosine. The protein is 5-methylthioadenosine/S-adenosylhomocysteine deaminase of Thermodesulfovibrio yellowstonii (strain ATCC 51303 / DSM 11347 / YP87).